We begin with the raw amino-acid sequence, 388 residues long: Succinate--CoA ligase [ADP-forming] subunit beta (388 aa).

The ATP-grasp domain occupies 9–244; it reads KEILRKFGVA…PDEEDPKETQ (236 aa). Residues lysine 46, 53–55, glutamate 99, cysteine 102, and glutamate 107 contribute to the ATP site; that span reads GRG. Mg(2+) contacts are provided by asparagine 199 and aspartate 213. Substrate contacts are provided by residues asparagine 264 and 321–323; that span reads GIM.

The protein belongs to the succinate/malate CoA ligase beta subunit family. As to quaternary structure, heterotetramer of two alpha and two beta subunits. It depends on Mg(2+) as a cofactor.

The enzyme catalyses succinate + ATP + CoA = succinyl-CoA + ADP + phosphate. It carries out the reaction GTP + succinate + CoA = succinyl-CoA + GDP + phosphate. It functions in the pathway carbohydrate metabolism; tricarboxylic acid cycle; succinate from succinyl-CoA (ligase route): step 1/1. Its function is as follows. Succinyl-CoA synthetase functions in the citric acid cycle (TCA), coupling the hydrolysis of succinyl-CoA to the synthesis of either ATP or GTP and thus represents the only step of substrate-level phosphorylation in the TCA. The beta subunit provides nucleotide specificity of the enzyme and binds the substrate succinate, while the binding sites for coenzyme A and phosphate are found in the alpha subunit. In Anaeromyxobacter dehalogenans (strain 2CP-C), this protein is Succinate--CoA ligase [ADP-forming] subunit beta.